Consider the following 55-residue polypeptide: uncharacterized protein (55 aa).

This is an uncharacterized protein from Bacillus subtilis (strain 168).